Reading from the N-terminus, the 633-residue chain is Probable sodium/potassium/calcium exchanger CG1090 (633 aa).

The first 21 residues, 1 to 21 (MWNMGLLFLIYYCVSIYSAKG), serve as a signal peptide directing secretion. Over 22–111 (DTKDGQVLPL…PLMNKWARQH (90 aa)) the chain is Extracellular. The chain crosses the membrane as a helical span at residues 112 to 132 (GGLILHILVAVFTFFGLAIVC). At 133-157 (DEYFVASLDRLCEELKLSPDVAGAT) the chain is on the cytoplasmic side. One copy of the Alpha-1 repeat lies at 153–193 (VAGATFMAAGSSAPELATVVIGVFFAKDDIGISGVIGSAVF). Residues 158 to 178 (FMAAGSSAPELATVVIGVFFA) traverse the membrane as a helical segment. The Extracellular segment spans residues 179–181 (KDD). A helical membrane pass occupies residues 182–202 (IGISGVIGSAVFNIMFVISVC). Residues 203 to 220 (ALCSGTVCQLNWWPLVRD) are Cytoplasmic-facing. 2 consecutive transmembrane segments (helical) span residues 221-241 (CFFYCVSILVMLIIIFNDVIS) and 242-262 (CFESVVMLLCYVGYCVALHFN). Topologically, residues 263 to 427 (TELERWALGL…EPRRDPLLRP (165 aa)) are extracellular. Polar residues-rich tracts occupy residues 298–310 (YTQESVGQTQGQK), 320–333 (AKPQSDYQDYSDPN), and 395–405 (QVVSTQATSAG). The segment at 298-422 (YTQESVGQTQ…TDKQREPRRD (125 aa)) is disordered. Residues 411-422 (KSTDKQREPRRD) show a composition bias toward basic and acidic residues. The helical transmembrane segment at 428 to 448 (MEGGLPALVSWYVVYPIHFLC) threads the bilayer. Residues 449–468 (KKTMPDCRQEQYRNWYPFTF) are Cytoplasmic-facing. The chain crosses the membrane as a helical span at residues 469–489 (LMSMVWISFYSYFMVWMITVI). Residues 490-500 (GSTLAIPDTVM) are Extracellular-facing. The helical transmembrane segment at 501 to 521 (GLTFVAAGVSVPDALSSIAVI) threads the bilayer. One copy of the Alpha-2 repeat lies at 506 to 537 (AAGVSVPDALSSIAVIKEGFGDMAVSNAIGSN). Residues 522–535 (KEGFGDMAVSNAIG) are Cytoplasmic-facing. The helical transmembrane segment at 536-556 (SNVFDILVCLGLPWFIQTAII) threads the bilayer. Over 557-568 (KPGSHVNVISKG) the chain is Extracellular. The helical transmembrane segment at 569–589 (LAYSTLSLFSTVVFLILSTHL) threads the bilayer. Topologically, residues 590–597 (NGWKLDKR) are cytoplasmic. A helical membrane pass occupies residues 598–618 (LGIILMVWYLFFITLASLYEL). Over 619-633 (NVFGYMNPPECPSTY) the chain is Extracellular.

Belongs to the Ca(2+):cation antiporter (CaCA) (TC 2.A.19) family. SLC24A subfamily.

Its subcellular location is the membrane. May function in the removal and maintenance of calcium homeostasis. Transports one Ca(2+) and 1 K(+) in exchange for 4 Na(+). The chain is Probable sodium/potassium/calcium exchanger CG1090 from Drosophila melanogaster (Fruit fly).